A 372-amino-acid polypeptide reads, in one-letter code: Ubl carboxyl-terminal hydrolase 18 (372 aa).

A disordered region spans residues 19-45 (SSQSPADLEEKKEEDSNMKREQPRERP). Residues 26 to 45 (LEEKKEEDSNMKREQPRERP) are compositionally biased toward basic and acidic residues. The tract at residues 36–51 (MKREQPRERPRAWDYP) is mediates interaction with IFNAR2. A mediates interaction with STAT2 region spans residues 51–112 (PHGLVGLHNI…MLLLLEKMQD (62 aa)). One can recognise a USP domain in the interval 55 to 370 (VGLHNIGQTC…TAYLLVYMKM (316 aa)). Cys64 functions as the Nucleophile in the catalytic mechanism. Residues 303 to 312 (ELFAVIAHVG) form a mediates interaction with STAT2 and necessary for the negative regulation of the type I IFN signaling pathway region. Residues 313–372 (MADSGHYCVYIRNAVDGKWFCFNDSNICLVSWEDIQCTYGNPNYHWQETAYLLVYMKMEC) are mediates interaction with IFNAR2. Catalysis depends on His318, which acts as the Proton acceptor.

It belongs to the peptidase C19 family. In terms of assembly, interacts with STAT2; the interaction is direct. Interacts with IFNAR2; indirectly via STAT2, it negatively regulates the assembly of the ternary interferon-IFNAR1-IFNAR2 complex and inhibits type I interferon signaling. Interacts with STING1. Interacts with USP20.

Its subcellular location is the cytoplasm. It is found in the nucleus. The catalysed reaction is Thiol-dependent hydrolysis of ester, thioester, amide, peptide and isopeptide bonds formed by the C-terminal Gly of ubiquitin (a 76-residue protein attached to proteins as an intracellular targeting signal).. Its function is as follows. Interferon-induced ISG15-specific protease that plays a crucial role for maintaining a proper balance of ISG15-conjugated proteins in cells. Regulates protein ISGylation by efficiently cleaving ISG15 conjugates linked via isopeptide bonds. Regulates T-cell activation and T-helper 17 (Th17) cell differentiation by deubiquitinating TAK1, likely to keep TAK1-TAB complexes in steady conditions. In turn, restricts activation of NF-kappa-B, NFAT, and JNK as well as expression of IL2 in T-cells after TCR activation. Acts as a molecular adapter with USP20 to promote innate antiviral response through deubiquitinating STING1. Involved also in the negative regulation of the inflammatory response triggered by type I interferon. Upon recruitment by STAT2 to the type I interferon receptor subunit IFNAR2 interferes with the assembly of the ternary interferon-IFNAR1-IFNAR2 complex and acts as a negative regulator of the type I interferon signaling pathway. Has enzymatic activity similar to isoform 1 and interferes with type I interferon signaling. Major deISGylation enzyme for nuclear proteins. The protein is Ubl carboxyl-terminal hydrolase 18 (USP18) of Homo sapiens (Human).